Here is a 339-residue protein sequence, read N- to C-terminus: Annexin A2 (339 aa).

At Ser2 the chain carries N-acetylserine. Residues 2–24 are S100A10-binding site; the sequence is STVHEILSKLSLEGDHSLPPSAY. Tyr24 bears the Phosphotyrosine; by SRC mark. Thr26 is modified (phosphothreonine; by PKC). Annexin repeat units lie at residues 33–104, 105–176, 189–261, and 265–336; these read FDAD…GLLK, TPSQ…ALAK, ELID…NLVQ, and NKQL…NLCG.

The protein belongs to the annexin family. In terms of assembly, heterotetramer containing 2 light chains of S100A10/p11 and 2 heavy chains of ANXA2/p36.

It localises to the secreted. Its subcellular location is the extracellular space. The protein localises to the extracellular matrix. It is found in the basement membrane. Its function is as follows. Calcium-regulated membrane-binding protein whose affinity for calcium is greatly enhanced by anionic phospholipids. It binds two calcium ions with high affinity. The polypeptide is Annexin A2 (ANXA2) (Gallus gallus (Chicken)).